A 158-amino-acid polypeptide reads, in one-letter code: MARFDDPKQRPYKLPDLCTELNTSLQDVSIACVYCKATLERTEVYQFAFKDLCIVYRDCIAYAACHKCIDFYSRIRELRYYSNSVYGETLEKITNTELYNLLIRCLRCQKPLNPAEKRRHLKDKRRFHSIAGQYRGQCNTCCDQARQERLRRRRETQV.

Zinc fingers lie at residues 32-68 (CVYC…CHKC) and 105-141 (CLRC…CNTC). Residues 156–158 (TQV) carry the PDZ-binding domain motif.

It belongs to the papillomaviridae E6 protein family. In terms of assembly, forms homodimers. Interacts with ubiquitin-protein ligase UBE3A/E6-AP and thus forms a complex with human TP53. Interacts with human NFX1 and MAGI3. Interacts with human IRF3; this interaction inhibits the establishment of antiviral state. Interacts with human TYK2; this interaction inhibits JAK-STAT activation by interferon alpha. Interacts with host DLG1; this interaction leads to the proteasomal degradation of DLG1.

It is found in the host cytoplasm. Its subcellular location is the host nucleus. This protein has transforming activity in vitro. Its function is as follows. Plays a major role in the induction and maintenance of cellular transformation. Acts mainly as an oncoprotein by stimulating the destruction of many host cell key regulatory proteins. E6 associates with host UBE3A/E6-AP ubiquitin-protein ligase, and inactivates tumor suppressors TP53 and TP73 by targeting them to the 26S proteasome for degradation. In turn, DNA damage and chromosomal instabilities increase and lead to cell proliferation and cancer development. The complex E6/E6AP targets several other substrates to degradation via the proteasome including host DLG1 or NFX1, a repressor of human telomerase reverse transcriptase (hTERT). The resulting increased expression of hTERT prevents the shortening of telomere length leading to cell immortalization. Other cellular targets including BAK1, Fas-associated death domain-containing protein (FADD) and procaspase 8, are degraded by E6/E6AP causing inhibition of apoptosis. E6 also inhibits immune response by interacting with host IRF3 and TYK2. These interactions prevent IRF3 transcriptional activities and inhibit TYK2-mediated JAK-STAT activation by interferon alpha resulting in inhibition of the interferon signaling pathway. The sequence is that of Protein E6 from Homo sapiens (Human).